Reading from the N-terminus, the 280-residue chain is Large ribosomal subunit protein uL2 (280 aa).

Disordered stretches follow at residues 27–58 (STPE…GGGH) and 226–280 (MNPV…KHGR). Composition is skewed to basic residues over residues 37–58 (LHGH…GGGH) and 268–280 (IVRR…KHGR).

The protein belongs to the universal ribosomal protein uL2 family. Part of the 50S ribosomal subunit. Forms a bridge to the 30S subunit in the 70S ribosome.

Functionally, one of the primary rRNA binding proteins. Required for association of the 30S and 50S subunits to form the 70S ribosome, for tRNA binding and peptide bond formation. It has been suggested to have peptidyltransferase activity; this is somewhat controversial. Makes several contacts with the 16S rRNA in the 70S ribosome. This chain is Large ribosomal subunit protein uL2, found in Mycobacterium marinum (strain ATCC BAA-535 / M).